We begin with the raw amino-acid sequence, 399 residues long: MAKNRHLFTSESVSDGHPDKIADQISDAILDAIISKDPDARVACETTVTTGLVLVAGEITTSVYVDIPKIVRDTIKEIGYTRAKYGFDAETCAVLTAIDEQSPDIAQGVDEALESRSGNEIDAAIEAIGAGDQGLMFGFATDETEELMPLPIFLAHGLARKLTELRKTNKLDYLRPDAKTQVTVEYDEFNQPVRIDTIVVSTQHHPDITQEQIAKDLHTYLFPEVIDASFLDEDTKYFINPTGRFVIGGPLGDAGLTGRKIIVDTYGGYARHGGGAFSGKDPTKVDRSGAYAARYVAKNIVAAGLAKKVEVQVAYAIGVARPVSISIDTYGTSDYSEQELIDGVNALFDLRPAGIIHMLDLRRPIYRQTAAFGHFGRSDLDLPWERTDKAEALKKLIVK.

His17 is a binding site for ATP. Residue Asp19 participates in Mg(2+) binding. Glu45 provides a ligand contact to K(+). Glu58 and Gln101 together coordinate L-methionine. The flexible loop stretch occupies residues 101–111 (QSPDIAQGVDE). Residues 177–179 (DAK), 244–245 (RF), Asp253, 259–260 (RK), Ala276, and Lys280 each bind ATP. Asp253 contributes to the L-methionine binding site. Lys284 is an L-methionine binding site.

This sequence belongs to the AdoMet synthase family. Homotetramer; dimer of dimers. Mg(2+) is required as a cofactor. The cofactor is K(+).

It is found in the cytoplasm. The enzyme catalyses L-methionine + ATP + H2O = S-adenosyl-L-methionine + phosphate + diphosphate. It participates in amino-acid biosynthesis; S-adenosyl-L-methionine biosynthesis; S-adenosyl-L-methionine from L-methionine: step 1/1. Catalyzes the formation of S-adenosylmethionine (AdoMet) from methionine and ATP. The overall synthetic reaction is composed of two sequential steps, AdoMet formation and the subsequent tripolyphosphate hydrolysis which occurs prior to release of AdoMet from the enzyme. This Listeria monocytogenes serovar 1/2a (strain ATCC BAA-679 / EGD-e) protein is S-adenosylmethionine synthase.